The following is a 455-amino-acid chain: Genome polyprotein (455 aa).

Cys5 functions as the For nuclear inclusion protein A activity in the catalytic mechanism. Over residues 182 to 198 (NLDAGKESKKETSDKGN) the composition is skewed to basic and acidic residues. Residues 182 to 225 (NLDAGKESKKETSDKGNKPQNSQVGQGSKEPTKTGTVSKDVNVG) form a disordered region.

Belongs to the potyviridae genome polyprotein family. Genome polyprotein of potyviruses undergoes post-translational proteolytic processing by the main proteinase NIa-pro resulting in the production of at least ten individual proteins. The P1 proteinase and the HC-pro cleave only their respective C-termini autocatalytically. 6K1 is essential for proper proteolytic separation of P3 from CI.

It is found in the virion. It catalyses the reaction RNA(n) + a ribonucleoside 5'-triphosphate = RNA(n+1) + diphosphate. An RNA-dependent RNA polymerase that plays an essential role in the virus replication. Its function is as follows. Involved in aphid transmission, cell-to-cell and systemis movement, encapsidation of the viral RNA and in the regulation of viral RNA amplification. In Citrullus lanatus (Watermelon), this protein is Genome polyprotein.